A 303-amino-acid chain; its full sequence is Probable 5-dehydro-4-deoxyglucarate dehydratase (303 aa).

This sequence belongs to the DapA family.

The enzyme catalyses 5-dehydro-4-deoxy-D-glucarate + H(+) = 2,5-dioxopentanoate + CO2 + H2O. It functions in the pathway carbohydrate acid metabolism; D-glucarate degradation; 2,5-dioxopentanoate from D-glucarate: step 2/2. The protein is Probable 5-dehydro-4-deoxyglucarate dehydratase of Acinetobacter baylyi (strain ATCC 33305 / BD413 / ADP1).